The primary structure comprises 200 residues: Ribosomal RNA large subunit methyltransferase E (200 aa).

5 residues coordinate S-adenosyl-L-methionine: Gly51, Trp53, Asp71, Asp90, and Asp112. The active-site Proton acceptor is the Lys151.

The protein belongs to the class I-like SAM-binding methyltransferase superfamily. RNA methyltransferase RlmE family.

It is found in the cytoplasm. It catalyses the reaction uridine(2552) in 23S rRNA + S-adenosyl-L-methionine = 2'-O-methyluridine(2552) in 23S rRNA + S-adenosyl-L-homocysteine + H(+). Functionally, specifically methylates the uridine in position 2552 of 23S rRNA at the 2'-O position of the ribose in the fully assembled 50S ribosomal subunit. This chain is Ribosomal RNA large subunit methyltransferase E, found in Treponema pallidum (strain Nichols).